The following is a 577-amino-acid chain: Arginine--tRNA ligase (577 aa).

The short motif at 122-132 (PNVAKEMHVGH) is the 'HIGH' region element.

The protein belongs to the class-I aminoacyl-tRNA synthetase family. Monomer.

The protein localises to the cytoplasm. The enzyme catalyses tRNA(Arg) + L-arginine + ATP = L-arginyl-tRNA(Arg) + AMP + diphosphate. The chain is Arginine--tRNA ligase from Escherichia coli O81 (strain ED1a).